We begin with the raw amino-acid sequence, 357 residues long: Arginine kinase (357 aa).

The region spanning 9–91 (KLEAGFKKLQ…FDPIIDDYHG (83 aa)) is the Phosphagen kinase N-terminal domain. Residue 64–68 (GVGIY) participates in substrate binding. In terms of domain architecture, Phosphagen kinase C-terminal spans 119–356 (FIISTRVRCG…LEMIKMEKAA (238 aa)). ATP contacts are provided by residues 122–126 (STRVR) and His-185. Residue Glu-225 participates in substrate binding. Arg-229 contributes to the ATP binding site. Cys-271 contributes to the substrate binding site. ATP contacts are provided by residues 280-284 (RASVH) and 309-314 (RGTRGE). A substrate-binding site is contributed by Glu-314.

The protein belongs to the ATP:guanido phosphotransferase family. In terms of assembly, monomer.

It is found in the cytoplasm. It catalyses the reaction L-arginine + ATP = N(omega)-phospho-L-arginine + ADP + H(+). Its function is as follows. Catalyzes the reversible transfer of the terminal phosphoryl group of ATP to L-arginine. This Limulus polyphemus (Atlantic horseshoe crab) protein is Arginine kinase.